A 332-amino-acid chain; its full sequence is Glycerol-3-phosphate dehydrogenase [NAD(P)+] (332 aa).

Positions 15, 16, and 110 each coordinate NADPH. 3 residues coordinate sn-glycerol 3-phosphate: K110, G137, and S139. Position 141 (A141) interacts with NADPH. K192, D245, S255, R256, and N257 together coordinate sn-glycerol 3-phosphate. The active-site Proton acceptor is the K192. Residue R256 coordinates NADPH. E282 is an NADPH binding site.

This sequence belongs to the NAD-dependent glycerol-3-phosphate dehydrogenase family.

Its subcellular location is the cytoplasm. The catalysed reaction is sn-glycerol 3-phosphate + NAD(+) = dihydroxyacetone phosphate + NADH + H(+). It catalyses the reaction sn-glycerol 3-phosphate + NADP(+) = dihydroxyacetone phosphate + NADPH + H(+). It participates in membrane lipid metabolism; glycerophospholipid metabolism. In terms of biological role, catalyzes the reduction of the glycolytic intermediate dihydroxyacetone phosphate (DHAP) to sn-glycerol 3-phosphate (G3P), the key precursor for phospholipid synthesis. This chain is Glycerol-3-phosphate dehydrogenase [NAD(P)+], found in Coxiella burnetii (strain CbuG_Q212) (Coxiella burnetii (strain Q212)).